The following is a 788-amino-acid chain: Endonuclease MutS2 (788 aa).

332–339 (GPNTGGKT) provides a ligand contact to ATP. The Smr domain maps to 713–788 (IDLRGLDSEE…GTGVTVVELK (76 aa)).

This sequence belongs to the DNA mismatch repair MutS family. MutS2 subfamily. As to quaternary structure, homodimer. Binds to stalled ribosomes, contacting rRNA.

Its function is as follows. Endonuclease that is involved in the suppression of homologous recombination and thus may have a key role in the control of bacterial genetic diversity. Acts as a ribosome collision sensor, splitting the ribosome into its 2 subunits. Detects stalled/collided 70S ribosomes which it binds and splits by an ATP-hydrolysis driven conformational change. Acts upstream of the ribosome quality control system (RQC), a ribosome-associated complex that mediates the extraction of incompletely synthesized nascent chains from stalled ribosomes and their subsequent degradation. Probably generates substrates for RQC. The protein is Endonuclease MutS2 of Clostridium acetobutylicum (strain ATCC 824 / DSM 792 / JCM 1419 / IAM 19013 / LMG 5710 / NBRC 13948 / NRRL B-527 / VKM B-1787 / 2291 / W).